The sequence spans 86 residues: 4-hydroxyphenylacetate decarboxylase small subunit (86 aa).

[4Fe-4S] cluster is bound by residues His3, Cys6, Cys19, Cys36, Cys45, Cys48, Cys62, and Cys80.

It belongs to the HPA decarboxylase small subunit family. In terms of assembly, heterooctamer consisting of 4 large (HpdB) subunits and 4 small (HpdC) subunits, arranged as a tetramer of heterodimers. [4Fe-4S] cluster is required as a cofactor.

It catalyses the reaction 4-hydroxyphenylacetate + H(+) = 4-methylphenol + CO2. The enzyme catalyses 3,4-dihydroxyphenylacetate + H(+) = 4-methylcatechol + CO2. Functionally, component of the HPA decarboxylase that decarboxylates phenylacetates with a hydroxyl group in the p-position. Active toward 4-hydroxyphenylacetate and 3,4-dihydroxyphenylacetate, forming 4-methylphenol and 4-methylcatechol, respectively. Is likely involved in the catabolism of aromatic amino acids such as tyrosine fermentation. 4-methylphenol (p-cresol) formation provides metabolic toxicity, which allows an active suppression of other microbes and may provide growth advantages for the producers in highly competitive environments. The small subunit is essential for enzymatic activity of HPA decarboxylase, and also seems to be involved in the regulation of the enzyme oligomeric state and catalytic activity. The polypeptide is 4-hydroxyphenylacetate decarboxylase small subunit (Clostridium scatologenes).